A 195-amino-acid chain; its full sequence is Imidazoleglycerol-phosphate dehydratase (195 aa).

The protein belongs to the imidazoleglycerol-phosphate dehydratase family.

The protein localises to the cytoplasm. The enzyme catalyses D-erythro-1-(imidazol-4-yl)glycerol 3-phosphate = 3-(imidazol-4-yl)-2-oxopropyl phosphate + H2O. The protein operates within amino-acid biosynthesis; L-histidine biosynthesis; L-histidine from 5-phospho-alpha-D-ribose 1-diphosphate: step 6/9. In Geobacter sp. (strain M21), this protein is Imidazoleglycerol-phosphate dehydratase.